The following is a 426-amino-acid chain: uncharacterized protein (426 aa).

Zn(2+) is bound at residue H277. E278 is a catalytic residue. Residues H281 and E357 each contribute to the Zn(2+) site.

Belongs to the peptidase M48B family. Zn(2+) is required as a cofactor.

This is an uncharacterized protein from Bacillus subtilis (strain 168).